We begin with the raw amino-acid sequence, 129 residues long: Small ribosomal subunit protein uS9 (129 aa).

It belongs to the universal ribosomal protein uS9 family.

The polypeptide is Small ribosomal subunit protein uS9 (Chlorobium chlorochromatii (strain CaD3)).